A 460-amino-acid chain; its full sequence is Argininosuccinate lyase (460 aa).

It belongs to the lyase 1 family. Argininosuccinate lyase subfamily.

It localises to the cytoplasm. The catalysed reaction is 2-(N(omega)-L-arginino)succinate = fumarate + L-arginine. It participates in amino-acid biosynthesis; L-arginine biosynthesis; L-arginine from L-ornithine and carbamoyl phosphate: step 3/3. The polypeptide is Argininosuccinate lyase (Lawsonia intracellularis (strain PHE/MN1-00)).